We begin with the raw amino-acid sequence, 528 residues long: Probable feruloyl esterase B-1 (528 aa).

The first 19 residues, 1–19 (MMWWFLLIGLASAAATASS), serve as a signal peptide directing secretion. 6 cysteine pairs are disulfide-bonded: cysteine 29–cysteine 78, cysteine 64–cysteine 117, cysteine 190–cysteine 445, cysteine 259–cysteine 276, cysteine 285–cysteine 295, and cysteine 505–cysteine 527. 2 N-linked (GlcNAc...) asparagine glycosylation sites follow: asparagine 83 and asparagine 101. Serine 191 (acyl-ester intermediate) is an active-site residue. Ca(2+)-binding residues include aspartate 260, aspartate 263, alanine 265, aspartate 267, and isoleucine 269. Asparagine 286, asparagine 354, and asparagine 385 each carry an N-linked (GlcNAc...) asparagine glycan. Active-site charge relay system residues include aspartate 404 and histidine 444.

The protein belongs to the tannase family.

The protein resides in the secreted. It catalyses the reaction feruloyl-polysaccharide + H2O = ferulate + polysaccharide.. Involved in degradation of plant cell walls. Hydrolyzes the feruloyl-arabinose ester bond in arabinoxylans as well as the feruloyl-galactose and feruloyl-arabinose ester bonds in pectin. The protein is Probable feruloyl esterase B-1 (faeB-1) of Aspergillus fumigatus (strain CBS 144.89 / FGSC A1163 / CEA10) (Neosartorya fumigata).